Consider the following 346-residue polypeptide: N-acetyl-gamma-glutamyl-phosphate reductase (346 aa).

The active site involves Cys-149.

This sequence belongs to the NAGSA dehydrogenase family. Type 1 subfamily.

The protein localises to the cytoplasm. It catalyses the reaction N-acetyl-L-glutamate 5-semialdehyde + phosphate + NADP(+) = N-acetyl-L-glutamyl 5-phosphate + NADPH + H(+). The protein operates within amino-acid biosynthesis; L-arginine biosynthesis; N(2)-acetyl-L-ornithine from L-glutamate: step 3/4. Catalyzes the NADPH-dependent reduction of N-acetyl-5-glutamyl phosphate to yield N-acetyl-L-glutamate 5-semialdehyde. This Pelobacter propionicus (strain DSM 2379 / NBRC 103807 / OttBd1) protein is N-acetyl-gamma-glutamyl-phosphate reductase.